A 179-amino-acid polypeptide reads, in one-letter code: Methylated-DNA--protein-cysteine methyltransferase, inducible (179 aa).

The active-site Nucleophile; methyl group acceptor is the Cys-141.

It belongs to the MGMT family.

It catalyses the reaction a 6-O-methyl-2'-deoxyguanosine in DNA + L-cysteinyl-[protein] = S-methyl-L-cysteinyl-[protein] + a 2'-deoxyguanosine in DNA. It carries out the reaction a 4-O-methyl-thymidine in DNA + L-cysteinyl-[protein] = a thymidine in DNA + S-methyl-L-cysteinyl-[protein]. Its function is as follows. Involved in the cellular defense against the biological effects of O6-methylguanine (O6-MeG) and O4-methylthymine (O4-MeT) in DNA. Repairs the methylated nucleobase in DNA by stoichiometrically transferring the methyl group to a cysteine residue in the enzyme. This is a suicide reaction: the enzyme is irreversibly inactivated. This is Methylated-DNA--protein-cysteine methyltransferase, inducible (adaB) from Bacillus subtilis (strain 168).